Reading from the N-terminus, the 674-residue chain is RNA polymerase sigma factor RpoD (674 aa).

Residues 214-252 (AEGAAPAARRPASDEPEYDADGNPISRIDEEEDDDDSSN) are disordered. Positions 440–510 (MVEANLRLVI…TRSIADQART (71 aa)) are sigma-70 factor domain-2. The Interaction with polymerase core subunit RpoC signature appears at 464–467 (DLIQ). The tract at residues 519-595 (ETINKLVRTG…DKNAILPLDS (77 aa)) is sigma-70 factor domain-3. Positions 608-661 (VLASLTPREERVLRMRFGIGMNTDHTLEEVGQQFSVTRERIRQIEAKALRKLKH) are sigma-70 factor domain-4. Residues 634 to 653 (LEEVGQQFSVTRERIRQIEA) constitute a DNA-binding region (H-T-H motif).

It belongs to the sigma-70 factor family. RpoD/SigA subfamily. In terms of assembly, interacts transiently with the RNA polymerase catalytic core.

It localises to the cytoplasm. Functionally, sigma factors are initiation factors that promote the attachment of RNA polymerase to specific initiation sites and are then released. This sigma factor is the primary sigma factor during exponential growth. The chain is RNA polymerase sigma factor RpoD from Rhodobacter capsulatus (strain ATCC BAA-309 / NBRC 16581 / SB1003).